A 426-amino-acid chain; its full sequence is Tyrosine--tRNA ligase (426 aa).

An L-tyrosine-binding site is contributed by Tyr35. The 'HIGH' region motif lies at 40 to 49; that stretch reads PTADSLHIGH. L-tyrosine-binding residues include Tyr172 and Gln176. The short motif at 232 to 236 is the 'KMSKS' region element; it reads KLGKS. Lys235 provides a ligand contact to ATP. Residues 357-414 enclose the S4 RNA-binding domain; it reads ENIKDILVNSKLSKSKNNAKSVILSSSIRINNKKQKSIDFMFKKEDKLFNLFTLIKKG.

The protein belongs to the class-I aminoacyl-tRNA synthetase family. TyrS type 1 subfamily. Homodimer.

It localises to the cytoplasm. The catalysed reaction is tRNA(Tyr) + L-tyrosine + ATP = L-tyrosyl-tRNA(Tyr) + AMP + diphosphate + H(+). Catalyzes the attachment of tyrosine to tRNA(Tyr) in a two-step reaction: tyrosine is first activated by ATP to form Tyr-AMP and then transferred to the acceptor end of tRNA(Tyr). This chain is Tyrosine--tRNA ligase, found in Wigglesworthia glossinidia brevipalpis.